We begin with the raw amino-acid sequence, 375 residues long: tRNA/tmRNA (uracil-C(5))-methyltransferase (375 aa).

S-adenosyl-L-methionine-binding residues include Gln-197, Tyr-225, Asn-230, Glu-246, and Asp-306. Cys-331 functions as the Nucleophile in the catalytic mechanism. Residue Glu-365 is the Proton acceptor of the active site.

Belongs to the class I-like SAM-binding methyltransferase superfamily. RNA M5U methyltransferase family. TrmA subfamily.

It carries out the reaction uridine(54) in tRNA + S-adenosyl-L-methionine = 5-methyluridine(54) in tRNA + S-adenosyl-L-homocysteine + H(+). It catalyses the reaction uridine(341) in tmRNA + S-adenosyl-L-methionine = 5-methyluridine(341) in tmRNA + S-adenosyl-L-homocysteine + H(+). In terms of biological role, dual-specificity methyltransferase that catalyzes the formation of 5-methyluridine at position 54 (m5U54) in all tRNAs, and that of position 341 (m5U341) in tmRNA (transfer-mRNA). The chain is tRNA/tmRNA (uracil-C(5))-methyltransferase from Aliarcobacter butzleri (strain RM4018) (Arcobacter butzleri).